The sequence spans 221 residues: Oxaloacetate tautomerase FAHD1, mitochondrial (221 aa).

The N-terminal 24 residues, 1-24, are a transit peptide targeting the mitochondrion; sequence MAASRPLSRFWEWGKNIVCVGRNY. An oxalate-binding site is contributed by Arg-22. Residue Ser-37 is modified to Phosphoserine. Residues Glu-68, Glu-70, and Asp-99 each contribute to the Mg(2+) site. Lys-110 bears the N6-acetyllysine mark. An N6-succinyllysine modification is found at Lys-112. Residues Lys-120 and Thr-189 each contribute to the oxalate site.

It belongs to the FAH family. Homodimer. It depends on Mg(2+) as a cofactor. Mn(2+) is required as a cofactor. Ubiquitous (at protein level).

It localises to the mitochondrion. Its subcellular location is the cytoplasm. The protein resides in the cytosol. The enzyme catalyses oxaloacetate = enol-oxaloacetate. The catalysed reaction is oxaloacetate + H(+) = pyruvate + CO2. It carries out the reaction a 3-acylpyruvate + H2O = a carboxylate + pyruvate + H(+). It catalyses the reaction acetylpyruvate + H2O = acetate + pyruvate + H(+). The enzyme catalyses 3-fumarylpyruvate + H2O = fumarate + pyruvate + H(+). Oxaloacetate decarboxylation is competitively inhibited by oxalate. In terms of biological role, tautomerase that converts enol-oxaloacetate, a strong inhibitor of succinate dehydrogenase, to the physiological keto form of oxaloacetate. It is thereby required to maximize aerobic respiration efficiency by preventing succinate dehydrogenase inhibition. Also acts as a weak oxaloacetate decarboxylase (ODx), catalyzing the decarboxylation of oxaloacetate (OAA) to pyruvate and CO(2), and as such is likely a regulatory enzyme in the TCA cycle. Also displays acylpyruvase activity, being able to hydrolyze acetylpyruvate and fumarylpyruvate in vitro. Exhibits only a weak hydrolase activity on methylacetopyruvate and acetylacetone, and no activity toward acetoacetyl-CoA. The polypeptide is Oxaloacetate tautomerase FAHD1, mitochondrial (Homo sapiens (Human)).